The chain runs to 26 residues: Protein YsdD (26 aa).

Positions 1 to 26 (MTIDKNWLNRSNKDPGRSLRFTHQPV) are disordered.

In Escherichia coli (strain K12), this protein is Protein YsdD.